The following is a 154-amino-acid chain: Superoxide dismutase [Cu-Zn] (154 aa).

Residues histidine 47, histidine 49, and histidine 64 each contribute to the Cu cation site. A disulfide bridge connects residues cysteine 58 and cysteine 147. Zn(2+) contacts are provided by histidine 64, histidine 72, histidine 81, and aspartate 84. Histidine 121 is a Cu cation binding site. Positions 125-137 (DDLGRGGNEESKK) are enriched in basic and acidic residues. Residues 125–147 (DDLGRGGNEESKKTGNAGPRPAC) are disordered. Arginine 144 is a binding site for substrate.

As to quaternary structure, homodimer. The cofactor is Cu cation. Zn(2+) serves as cofactor.

The protein resides in the cytoplasm. It catalyses the reaction 2 superoxide + 2 H(+) = H2O2 + O2. Destroys radicals which are normally produced within the cells and which are toxic to biological systems. This chain is Superoxide dismutase [Cu-Zn], found in Aspergillus niger.